Here is a 367-residue protein sequence, read N- to C-terminus: Lysophosphatidic acid receptor 5 (367 aa).

At 1–25 (MQANSSAKSLPTECPDYQPIHHLHL) the chain is on the extracellular side. Asn-4 is a glycosylation site (N-linked (GlcNAc...) asparagine). Residues 26-46 (VVYSVVLAAGLPLNALALWVF) form a helical membrane-spanning segment. The Cytoplasmic portion of the chain corresponds to 47-54 (LRALRVHS). The helical transmembrane segment at 55–75 (VVSVYMCNLAASDLLFTLSLP) threads the bilayer. Topologically, residues 76–95 (LRLSYYARHYWPFPDFLCQL) are extracellular. An intrachain disulfide couples Cys-93 to Cys-174. Residues 96 to 116 (AGAVFQMNMYGSCIFLTLINV) form a helical membrane-spanning segment. The Cytoplasmic portion of the chain corresponds to 117 to 135 (DRYAAIVHPLRLRHLRRPR). The helical transmembrane segment at 136–156 (VARLLCLGVWALILVFAVPTI) threads the bilayer. Residues 157–186 (LAHQPSSCARDGRNVSLCFESFSDKLWKGS) lie on the Extracellular side of the membrane. N-linked (GlcNAc...) asparagine glycosylation is present at Asn-170. The helical transmembrane segment at 187 to 207 (LLPLLLLAEALGFLLPLAAVV) threads the bilayer. The Cytoplasmic segment spans residues 208-238 (YSSGRVFWTLARPDATRSQRRRKTVRLLLAS). The helical transmembrane segment at 239–259 (LVIFLLCFVPYNATLAVYGLL) threads the bilayer. The Extracellular portion of the chain corresponds to 260-275 (RGEVVPASSEARKKVR). A helical transmembrane segment spans residues 276–296 (GVLMVMVLLAGANCVLDPLVY). Topologically, residues 297 to 367 (YFSAEGFRNT…FTPSHEDSSF (71 aa)) are cytoplasmic. Positions 332–350 (LTETAHASTLTTTSQGQLQ) are enriched in low complexity. The tract at residues 332-367 (LTETAHASTLTTTSQGQLQPSDPRSSFTPSHEDSSF) is disordered. Positions 351-360 (PSDPRSSFTP) are enriched in polar residues.

This sequence belongs to the G-protein coupled receptor 1 family.

It localises to the cell membrane. Its function is as follows. Receptor for lysophosphatidic acid (LPA), a mediator of diverse cellular activities. The chain is Lysophosphatidic acid receptor 5 (LPAR5) from Bos taurus (Bovine).